We begin with the raw amino-acid sequence, 76 residues long: uncharacterized protein (76 aa).

Residues 40–60 (IVLNLVVLVGVVPLTWMFLGQ) traverse the membrane as a helical segment.

The protein resides in the membrane. This is an uncharacterized protein from Dictyostelium discoideum (Social amoeba).